The following is a 94-amino-acid chain: Putative pterin-4-alpha-carbinolamine dehydratase (94 aa).

The protein belongs to the pterin-4-alpha-carbinolamine dehydratase family.

It carries out the reaction (4aS,6R)-4a-hydroxy-L-erythro-5,6,7,8-tetrahydrobiopterin = (6R)-L-erythro-6,7-dihydrobiopterin + H2O. The protein is Putative pterin-4-alpha-carbinolamine dehydratase of Chloroflexus aggregans (strain MD-66 / DSM 9485).